The primary structure comprises 387 residues: Probable serine/threonine-protein kinase PBL18 (387 aa).

The interval 1–37 is disordered; the sequence is MGNCLDSSARVGNRESTFGGSSRISRKPNQSSRLSSL. Gly2 carries N-myristoyl glycine lipidation. The S-palmitoyl cysteine moiety is linked to residue Cys4. Residues 14–37 show a composition bias toward polar residues; that stretch reads RESTFGGSSRISRKPNQSSRLSSL. Residue Thr73 is modified to Phosphothreonine. The Protein kinase domain occupies 84-365; the sequence is FKPNSMIGEG…ADVLSTLQQL (282 aa). ATP contacts are provided by residues 90–98 and Lys122; that span reads IGEGGFGCV. A Phosphotyrosine modification is found at Tyr167. The active-site Proton acceptor is Asp215. Residue Ser219 is modified to Phosphoserine. Residues Thr250 and Thr255 each carry the phosphothreonine modification. Phosphotyrosine is present on Tyr263. Residues 368–387 form a disordered region; it reads SSKKMGSTQNIVMSPSSHMS.

It belongs to the protein kinase superfamily. Ser/Thr protein kinase family.

Its subcellular location is the cell membrane. The enzyme catalyses L-seryl-[protein] + ATP = O-phospho-L-seryl-[protein] + ADP + H(+). It catalyses the reaction L-threonyl-[protein] + ATP = O-phospho-L-threonyl-[protein] + ADP + H(+). Its function is as follows. May be involved in plant defense signaling. The chain is Probable serine/threonine-protein kinase PBL18 from Arabidopsis thaliana (Mouse-ear cress).